The following is a 324-amino-acid chain: uncharacterized protein (324 aa).

This sequence belongs to the mgp1/MG371 family.

This is an uncharacterized protein from Mycoplasma genitalium (strain ATCC 33530 / DSM 19775 / NCTC 10195 / G37) (Mycoplasmoides genitalium).